Consider the following 589-residue polypeptide: MAPHVRILSESLANKIAAGEVVERPASVVKELIENALDAGATDIRLEISAGGRRLIRVSDNGHGMSREDALLALERHATSKIRSDQDLETILTLGFRGEALPSIASVSRLRLKSREAGSIEGTEITAEGGTVRSVTACGMAVGTDLTVEQLFFNTPARLKFLRSAETEAAHVGDLMVRMAISRPDVSFSYYHDGRELLRVVPGDLRQRLLKLAARDATLFPVDGETAAARISGYLAPPAAARSTTSAMFTYINGRFVRDKVIQHAIMQAFRPILEKGRYPLVALFIELPAGEVDVNVHPTKHEVRFRRQAQVHDTIQGVLEEVLRDSPWLQRREAPQRPEPARPYTTPPPSSHREGVQHALDRFMAATPVAPPRIYEQPEPYRPPEPPAASEPTSGYFSGLSVIGQFRAAYILCQAEDRLVIIDQHAAYERVRFEQLKAGFATGGIESQRLLLPDTLELSFSEADTVRRYLNILEPLGFELEEFGGQTWRINAVPRIVAEQDHCRLLRDLLAELAEQGSNAHFDQLRDELLARVACHSVVRGSHPLERRQMEELLRAMDRTDFSAHCPHGRPVSHEITLRELEKFFNRP.

2 disordered regions span residues 330–355 (LQRREAPQRPEPARPYTTPPPSSHRE) and 374–394 (RIYEQPEPYRPPEPPAASEPT). The segment covering 331–341 (QRREAPQRPEP) has biased composition (basic and acidic residues). A compositionally biased stretch (pro residues) spans 381 to 390 (PYRPPEPPAA).

Belongs to the DNA mismatch repair MutL/HexB family.

This protein is involved in the repair of mismatches in DNA. It is required for dam-dependent methyl-directed DNA mismatch repair. May act as a 'molecular matchmaker', a protein that promotes the formation of a stable complex between two or more DNA-binding proteins in an ATP-dependent manner without itself being part of a final effector complex. This Trichlorobacter lovleyi (strain ATCC BAA-1151 / DSM 17278 / SZ) (Geobacter lovleyi) protein is DNA mismatch repair protein MutL.